Here is a 90-residue protein sequence, read N- to C-terminus: Small ribosomal subunit protein bS16 (90 aa).

It belongs to the bacterial ribosomal protein bS16 family. Part of the 30S ribosomal subunit.

This Bacillus subtilis (strain 168) protein is Small ribosomal subunit protein bS16.